The chain runs to 351 residues: Serine/threonine-protein kinase mos (351 aa).

The 270-residue stretch at 71 to 340 folds into the Protein kinase domain; the sequence is FSIDGVIGSG…ERRTDDTENL (270 aa). ATP contacts are provided by residues 77–85 and lysine 98; that span reads IGSGGFGSV. Aspartate 194 serves as the catalytic Proton acceptor.

The protein belongs to the protein kinase superfamily. Ser/Thr protein kinase family.

The catalysed reaction is L-seryl-[protein] + ATP = O-phospho-L-seryl-[protein] + ADP + H(+). It carries out the reaction L-threonyl-[protein] + ATP = O-phospho-L-threonyl-[protein] + ADP + H(+). Its function is as follows. Suppresses the mitotic cell cycle in oocytes, forcing them to undergo meiosis II to produce haploid gametes. Acts as a MAPK kinase kinase (MAP3K) that acts upstream of MAP kinase in oocytes. The polypeptide is Serine/threonine-protein kinase mos (Patiria pectinifera (Starfish)).